We begin with the raw amino-acid sequence, 102 residues long: NADH-quinone oxidoreductase subunit K 1 (102 aa).

Transmembrane regions (helical) follow at residues L6–V26, L31–F51, and F65–L85.

The protein belongs to the complex I subunit 4L family. In terms of assembly, NDH-1 is composed of 14 different subunits. Subunits NuoA, H, J, K, L, M, N constitute the membrane sector of the complex.

Its subcellular location is the cell membrane. The enzyme catalyses a quinone + NADH + 5 H(+)(in) = a quinol + NAD(+) + 4 H(+)(out). In terms of biological role, NDH-1 shuttles electrons from NADH, via FMN and iron-sulfur (Fe-S) centers, to quinones in the respiratory chain. The immediate electron acceptor for the enzyme in this species is believed to be a menaquinone. Couples the redox reaction to proton translocation (for every two electrons transferred, four hydrogen ions are translocated across the cytoplasmic membrane), and thus conserves the redox energy in a proton gradient. The polypeptide is NADH-quinone oxidoreductase subunit K 1 (Symbiobacterium thermophilum (strain DSM 24528 / JCM 14929 / IAM 14863 / T)).